The following is a 183-amino-acid chain: Protein US32 (183 aa).

The protein belongs to the herpesviridae US1 family.

The sequence is that of Protein US32 (US32) from Homo sapiens (Human).